The chain runs to 133 residues: Interleukin-4 (133 aa).

The N-terminal stretch at 1-24 (MGLTSQLIPMLVCLLACTSNFVHG) is a signal peptide. 3 disulfides stabilise this stretch: cysteine 27–cysteine 133, cysteine 48–cysteine 85, and cysteine 70–cysteine 105. Residues asparagine 62, asparagine 96, and asparagine 102 are each glycosylated (N-linked (GlcNAc...) asparagine).

The protein belongs to the IL-4/IL-13 family.

Its subcellular location is the secreted. Its function is as follows. Participates in at least several B-cell activation processes as well as of other cell types. It is a costimulator of DNA-synthesis. It induces the expression of class II MHC molecules on resting B-cells. It enhances both secretion and cell surface expression of IgE and IgG1. It also regulates the expression of the low affinity Fc receptor for IgE (CD23) on both lymphocytes and monocytes. Positively regulates IL31RA expression in macrophages. Stimulates autophagy in dendritic cells by interfering with mTORC1 signaling and through the induction of RUFY4. The polypeptide is Interleukin-4 (IL4) (Tursiops truncatus (Atlantic bottle-nosed dolphin)).